A 541-amino-acid polypeptide reads, in one-letter code: Arginine--tRNA ligase (541 aa).

Positions Ala119–His129 match the 'HIGH' region motif.

The protein belongs to the class-I aminoacyl-tRNA synthetase family. Monomer.

Its subcellular location is the cytoplasm. The catalysed reaction is tRNA(Arg) + L-arginine + ATP = L-arginyl-tRNA(Arg) + AMP + diphosphate. The polypeptide is Arginine--tRNA ligase (Helicobacter pylori (strain HPAG1)).